Reading from the N-terminus, the 147-residue chain is Small ribosomal subunit protein eS19 (147 aa).

The protein belongs to the eukaryotic ribosomal protein eS19 family. In terms of assembly, component of the small ribosomal subunit.

Its subcellular location is the cytoplasm. The protein localises to the nucleus. Its function is as follows. Component of the small ribosomal subunit. The ribosome is a large ribonucleoprotein complex responsible for the synthesis of proteins in the cell. Required for pre-rRNA processing and maturation of 40S ribosomal subunits. The protein is Small ribosomal subunit protein eS19 (rps19) of Ictalurus punctatus (Channel catfish).